A 257-amino-acid polypeptide reads, in one-letter code: 5-oxoprolinase subunit A (257 aa).

Belongs to the LamB/PxpA family. Forms a complex composed of PxpA, PxpB and PxpC.

It carries out the reaction 5-oxo-L-proline + ATP + 2 H2O = L-glutamate + ADP + phosphate + H(+). Catalyzes the cleavage of 5-oxoproline to form L-glutamate coupled to the hydrolysis of ATP to ADP and inorganic phosphate. The sequence is that of 5-oxoprolinase subunit A from Bacillus subtilis (strain 168).